Consider the following 486-residue polypeptide: Outer dynein arm-docking complex subunit 4 (486 aa).

TPR repeat units follow at residues 14 to 47 (FTTY…QPDD), 49 to 81 (NCLV…NKNY), and 82 to 115 (FKGL…RPEL). Residues 153-180 (GVHPQNLNPSNKKESKKHSKKTDKGEKT) form a disordered region. TPR repeat units follow at residues 314–347 (GNLH…AKKC), 354–387 (SRAL…ACGG), 391–424 (AWLF…ADDI), and 431–464 (LNAS…AKLL).

In terms of assembly, component of the outer dynein arm-docking complex along with ODAD1, ODAD2 and ODAD3.

The protein localises to the cytoplasm. The protein resides in the cytoskeleton. It localises to the cilium axoneme. Its function is as follows. Component of the outer dynein arm-docking complex (ODA-DC) that mediates outer dynein arms (ODA) binding onto the doublet microtubule. Plays an essential role for the assembly of ODA-DC and in the docking of ODA in ciliary axoneme. The chain is Outer dynein arm-docking complex subunit 4 (odad4) from Danio rerio (Zebrafish).